Reading from the N-terminus, the 968-residue chain is RNA polymerase-associated protein RapA (968 aa).

The 171-residue stretch at 164–334 (DVGRRHAPRV…FARLRLLDPN (171 aa)) folds into the Helicase ATP-binding domain. Residue 177–184 (DEVGLGKT) coordinates ATP. The DEAH box signature appears at 280–283 (DEAH). The Helicase C-terminal domain maps to 490-685 (RVEWLMGYLT…ALKAQLEQGR (196 aa)).

This sequence belongs to the SNF2/RAD54 helicase family. RapA subfamily. As to quaternary structure, interacts with the RNAP. Has a higher affinity for the core RNAP than for the holoenzyme. Its ATPase activity is stimulated by binding to RNAP.

Functionally, transcription regulator that activates transcription by stimulating RNA polymerase (RNAP) recycling in case of stress conditions such as supercoiled DNA or high salt concentrations. Probably acts by releasing the RNAP, when it is trapped or immobilized on tightly supercoiled DNA. Does not activate transcription on linear DNA. Probably not involved in DNA repair. In Salmonella schwarzengrund (strain CVM19633), this protein is RNA polymerase-associated protein RapA.